A 236-amino-acid polypeptide reads, in one-letter code: Leucyl/phenylalanyl-tRNA--protein transferase (236 aa).

This sequence belongs to the L/F-transferase family.

Its subcellular location is the cytoplasm. It carries out the reaction N-terminal L-lysyl-[protein] + L-leucyl-tRNA(Leu) = N-terminal L-leucyl-L-lysyl-[protein] + tRNA(Leu) + H(+). The enzyme catalyses N-terminal L-arginyl-[protein] + L-leucyl-tRNA(Leu) = N-terminal L-leucyl-L-arginyl-[protein] + tRNA(Leu) + H(+). The catalysed reaction is L-phenylalanyl-tRNA(Phe) + an N-terminal L-alpha-aminoacyl-[protein] = an N-terminal L-phenylalanyl-L-alpha-aminoacyl-[protein] + tRNA(Phe). Functionally, functions in the N-end rule pathway of protein degradation where it conjugates Leu, Phe and, less efficiently, Met from aminoacyl-tRNAs to the N-termini of proteins containing an N-terminal arginine or lysine. The protein is Leucyl/phenylalanyl-tRNA--protein transferase of Vibrio parahaemolyticus serotype O3:K6 (strain RIMD 2210633).